The primary structure comprises 712 residues: Amino-acid acetyltransferase, mitochondrial (712 aa).

Residues 1-47 constitute a mitochondrion transit peptide; the sequence is MFVRTCRSSCNAWTNATSTTQAGSLLPPNAHRSVVLTLSLQACSART. The interval 55–99 is disordered; that stretch reads FASTTSQSKRQEAEAEEKRQVSPRLGPSAPRSSYPSSAEARQKRD. A compositionally biased stretch (basic and acidic residues) spans 63–74; sequence KRQEAEAEEKRQ. A compositionally biased stretch (low complexity) spans 81–93; sequence PSAPRSSYPSSAE. One can recognise an N-acetyltransferase domain in the interval 534–702; the sequence is GVPRLRLTDT…YEDVCRNIAP (169 aa).

It belongs to the acetyltransferase family.

Its subcellular location is the mitochondrion. The enzyme catalyses L-glutamate + acetyl-CoA = N-acetyl-L-glutamate + CoA + H(+). The protein operates within amino-acid biosynthesis; L-arginine biosynthesis; N(2)-acetyl-L-ornithine from L-glutamate: step 1/4. Inhibited by arginine. Functionally, N-acetylglutamate synthase involved in arginine biosynthesis. The sequence is that of Amino-acid acetyltransferase, mitochondrial (arg-14) from Neurospora crassa (strain ATCC 24698 / 74-OR23-1A / CBS 708.71 / DSM 1257 / FGSC 987).